Reading from the N-terminus, the 574-residue chain is K(+)/H(+) antiporter NhaP2 (574 aa).

13 helical membrane-spanning segments follow: residues 6–26, 34–54, 58–78, 87–107, 109–129, 173–193, 196–216, 219–239, 242–262, 271–291, 299–319, 335–355, and 359–379; these read INSF…LSPM, ILLI…GGIL, YSTA…DGGM, VALW…TSIT, VMAA…GAIV, IAIL…ISFI, FGLG…LVNV, LAEG…YATS, LGGS…NKPT, VLDG…GLLL, IWLP…PLAV, WFIS…VFPM, and LPGA…SLLV. The region spanning 405–486 is the RCK C-terminal domain; sequence SGVEIYPKSE…LEALSNLFSQ (82 aa).

It belongs to the monovalent cation:proton antiporter 1 (CPA1) transporter (TC 2.A.36) family. NhaP2 subfamily.

The protein resides in the cell inner membrane. It catalyses the reaction K(+)(in) + H(+)(out) = K(+)(out) + H(+)(in). In terms of biological role, k(+)/H(+) antiporter that extrudes potassium in exchange for external protons and maintains the internal concentration of potassium under toxic levels. The protein is K(+)/H(+) antiporter NhaP2 of Shewanella oneidensis (strain ATCC 700550 / JCM 31522 / CIP 106686 / LMG 19005 / NCIMB 14063 / MR-1).